Here is a 277-residue protein sequence, read N- to C-terminus: Cell death abnormality protein 2 (277 aa).

One can recognise an SH2 domain in the interval 14-112 (FYFPGMSRED…EASLLSAYKK (99 aa)). In terms of domain architecture, SH3 1 spans 113 to 173 (PIIEVVVGTF…PANYVQVQSG (61 aa)). Positions 179–217 (RISKGTSQSSIGSSGNGAERFSSTSTSSENAEAHPTLPT) are disordered. Low complexity predominate over residues 182-206 (KGTSQSSIGSSGNGAERFSSTSTSS). Residues 214-275 (TLPTTAKVTF…PFTYIRFNTA (62 aa)) enclose the SH3 2 domain.

The protein belongs to the CRK family. As to quaternary structure, interacts with ced-5 (via C-terminus which contains a candidate SH3-binding, proline-rich region). Forms a ternary complex with ced-5 and ced-12. Interacts (via SH-2 domain) with src-1 (when activated and phosphorylated at 'Tyr-416').

Functionally, required for cell migration and engulfment of cell corpses but not for programmed cell death/apoptosis. Also has a role in the migration of the 2 gonadal distal tip cells (DTCs). The sequence is that of Cell death abnormality protein 2 from Caenorhabditis briggsae.